Consider the following 184-residue polypeptide: Elongation factor P (184 aa).

It belongs to the elongation factor P family.

It is found in the cytoplasm. It functions in the pathway protein biosynthesis; polypeptide chain elongation. Its function is as follows. Involved in peptide bond synthesis. Stimulates efficient translation and peptide-bond synthesis on native or reconstituted 70S ribosomes in vitro. Probably functions indirectly by altering the affinity of the ribosome for aminoacyl-tRNA, thus increasing their reactivity as acceptors for peptidyl transferase. This chain is Elongation factor P, found in Polaromonas sp. (strain JS666 / ATCC BAA-500).